We begin with the raw amino-acid sequence, 283 residues long: MGIKDFRPLTPVQRFTSLDDFSDITKTEPEWDLTEPYKKKGGRNNYGRITARHRGGGHKQRYRIIDFKRDKTGIFATVEAIEYDPLRTARIALLRYDDQEKRYIIAPQELKVGSRVVSGPDAPPEVGNSLPLKNIPSGLPIYNIELVPGKGGQLVRSAGSSARMMGLDKEYAIVKLPSGEIRKVCAECYATVGQVSNPDHFNKSLGKAGRTRWLGWRPRVRGVAMNPVDHPNGGGQGKSKGGGGWQQLESPWGKPAKGKKTRHKRKNSTKFIIERRPKKKKKK.

Disordered stretches follow at residues 34 to 53 (TEPYKKKGGRNNYGRITARH) and 224 to 283 (AMNP…KKKK). Residues 232–245 (NGGGQGKSKGGGGW) are compositionally biased toward gly residues. A compositionally biased stretch (basic residues) spans 256–268 (AKGKKTRHKRKNS).

It belongs to the universal ribosomal protein uL2 family. Part of the 50S ribosomal subunit. Forms a bridge to the 30S subunit in the 70S ribosome.

One of the primary rRNA binding proteins. Required for association of the 30S and 50S subunits to form the 70S ribosome, for tRNA binding and peptide bond formation. It has been suggested to have peptidyltransferase activity; this is somewhat controversial. Makes several contacts with the 16S rRNA in the 70S ribosome. This chain is Large ribosomal subunit protein uL2, found in Methylacidiphilum infernorum (isolate V4) (Methylokorus infernorum (strain V4)).